A 289-amino-acid polypeptide reads, in one-letter code: uncharacterized protein (289 aa).

The segment at 268–289 is disordered; that stretch reads SDDGYETQWSDGPYSIPSGLSD.

This is an uncharacterized protein from Zea mays (Maize).